The chain runs to 169 residues: Protein MGF 110-12L (169 aa).

The next 3 membrane-spanning stretches (helical) occupy residues 2-20, 121-141, and 148-168; these read KVFL…LTYQ, QCCF…FAIC, and TTIK…PILN.

It belongs to the asfivirus MGF 110 family.

Its subcellular location is the host membrane. Functionally, plays a role in virus cell tropism, and may be required for efficient virus replication in macrophages. In African swine fever virus (isolate Pig/Kenya/KEN-50/1950) (ASFV), this protein is Protein MGF 110-12L.